The sequence spans 471 residues: Paraneoplastic antigen-like protein 8A (471 aa).

Disordered regions lie at residues 188–300 and 321–471; these read SAAG…EGSA and ASRG…PSAV. A compositionally biased stretch (basic residues) spans 238–247; sequence HSRRKRQKKT. Over residues 256 to 269 the composition is skewed to low complexity; the sequence is KKSQGSHSHSSASL. A compositionally biased stretch (basic and acidic residues) spans 270-287; the sequence is KHPEADDGKNRERLEHVR.

Belongs to the PNMA family.

The protein is Paraneoplastic antigen-like protein 8A (PNMA8A) of Bos taurus (Bovine).